We begin with the raw amino-acid sequence, 898 residues long: Phosphoenolpyruvate carboxylase (898 aa).

Active-site residues include His-138 and Lys-561.

It belongs to the PEPCase type 1 family. The cofactor is Mg(2+).

The catalysed reaction is oxaloacetate + phosphate = phosphoenolpyruvate + hydrogencarbonate. In terms of biological role, forms oxaloacetate, a four-carbon dicarboxylic acid source for the tricarboxylic acid cycle. In Streptococcus pneumoniae serotype 2 (strain D39 / NCTC 7466), this protein is Phosphoenolpyruvate carboxylase.